The following is a 338-amino-acid chain: Protein SPATA31F3 (338 aa).

Residues 7–29 traverse the membrane as a helical segment; it reads VLWDVGYPLYTYGSICIIALIIW. S152 carries the post-translational modification Phosphoserine. Basic and acidic residues predominate over residues 290-306; it reads DRTKNIEKSPTVTKDHV. Residues 290–338 form a disordered region; sequence DRTKNIEKSPTVTKDHVWGATTQKTTEDPEAQPPSTEEEGLIFCDAPSA.

The protein belongs to the SPATA31 family.

Its subcellular location is the membrane. In Homo sapiens (Human), this protein is Protein SPATA31F3.